The following is a 707-amino-acid chain: Elongation factor G (707 aa).

In terms of domain architecture, tr-type G spans 8–296 (ERYRNFGIMA…AVVDFLPAPT (289 aa)). Residues 17-24 (AHIDAGKT), 94-98 (DTPGH), and 148-151 (NKMD) each bind GTP.

Belongs to the TRAFAC class translation factor GTPase superfamily. Classic translation factor GTPase family. EF-G/EF-2 subfamily.

The protein localises to the cytoplasm. Its function is as follows. Catalyzes the GTP-dependent ribosomal translocation step during translation elongation. During this step, the ribosome changes from the pre-translocational (PRE) to the post-translocational (POST) state as the newly formed A-site-bound peptidyl-tRNA and P-site-bound deacylated tRNA move to the P and E sites, respectively. Catalyzes the coordinated movement of the two tRNA molecules, the mRNA and conformational changes in the ribosome. This chain is Elongation factor G, found in Paracoccus denitrificans (strain Pd 1222).